A 331-amino-acid chain; its full sequence is Phosphoribosylformylglycinamidine cyclo-ligase (331 aa).

This sequence belongs to the AIR synthase family.

It localises to the cytoplasm. The enzyme catalyses 2-formamido-N(1)-(5-O-phospho-beta-D-ribosyl)acetamidine + ATP = 5-amino-1-(5-phospho-beta-D-ribosyl)imidazole + ADP + phosphate + H(+). The protein operates within purine metabolism; IMP biosynthesis via de novo pathway; 5-amino-1-(5-phospho-D-ribosyl)imidazole from N(2)-formyl-N(1)-(5-phospho-D-ribosyl)glycinamide: step 2/2. The polypeptide is Phosphoribosylformylglycinamidine cyclo-ligase (Clostridium novyi (strain NT)).